The chain runs to 455 residues: MGLSVVILAAGKGSRMNSNKPKVLQTLAAKTLIEHVVSSVEKLNPDNIVVVTGHLKEQVEDALQGRNITFVYQQQQLGTGHAVLQALPYLKEQKVLILYGDVPLISTEVLENLVDTTNYDDLGVLTAFVENPQGLGRIVRDKFGAVTEIVEEKDANDIQRQIKEINTGIYCVHKNLLQKWLPEIKANNVQKEYYLTDIITFAKADHVSINVTHPINEFEILGVNDRTQLASLERVWQRNVAEKIMAKGVSIADPNRFDVRGNLDVGKDCWIDINVIIKGNVKLGNNVVIGANCILKNCIIEDNVRIKSNSMVDGSIIREGAIVGPFARVRPECDVKEGAVIGNFVEAKKTILGKGSKASHLTYLGDSEIGANCNIGAGVITCNYDGVNKHKTVIGDYAFIGSDSQLIAPVNIGQGATVGAGSTIVKDVPADNLAISRARQRHIDTWQRSVKKTDK.

The segment at Met1–Arg226 is pyrophosphorylase. Residues Leu8 to Gly11, Lys22, Gln73, Gly78 to Thr79, Tyr99 to Asp101, Gly136, Glu151, Asn166, and Asn224 each bind UDP-N-acetyl-alpha-D-glucosamine. Mg(2+) is bound at residue Asp101. Asn224 lines the Mg(2+) pocket. A linker region spans residues Thr227–Lys247. The N-acetyltransferase stretch occupies residues Gly248–Lys455. 2 residues coordinate UDP-N-acetyl-alpha-D-glucosamine: Arg330 and Lys348. The Proton acceptor role is filled by His360. The UDP-N-acetyl-alpha-D-glucosamine site is built by Tyr363 and Asn374. Acetyl-CoA contacts are provided by residues Ala377, Asn383–Tyr384, Ser402, Ala420, and Arg437.

It in the N-terminal section; belongs to the N-acetylglucosamine-1-phosphate uridyltransferase family. In the C-terminal section; belongs to the transferase hexapeptide repeat family. In terms of assembly, homotrimer. Mg(2+) serves as cofactor.

Its subcellular location is the cytoplasm. The catalysed reaction is alpha-D-glucosamine 1-phosphate + acetyl-CoA = N-acetyl-alpha-D-glucosamine 1-phosphate + CoA + H(+). It catalyses the reaction N-acetyl-alpha-D-glucosamine 1-phosphate + UTP + H(+) = UDP-N-acetyl-alpha-D-glucosamine + diphosphate. Its pathway is nucleotide-sugar biosynthesis; UDP-N-acetyl-alpha-D-glucosamine biosynthesis; N-acetyl-alpha-D-glucosamine 1-phosphate from alpha-D-glucosamine 6-phosphate (route II): step 2/2. The protein operates within nucleotide-sugar biosynthesis; UDP-N-acetyl-alpha-D-glucosamine biosynthesis; UDP-N-acetyl-alpha-D-glucosamine from N-acetyl-alpha-D-glucosamine 1-phosphate: step 1/1. It functions in the pathway bacterial outer membrane biogenesis; LPS lipid A biosynthesis. In terms of biological role, catalyzes the last two sequential reactions in the de novo biosynthetic pathway for UDP-N-acetylglucosamine (UDP-GlcNAc). The C-terminal domain catalyzes the transfer of acetyl group from acetyl coenzyme A to glucosamine-1-phosphate (GlcN-1-P) to produce N-acetylglucosamine-1-phosphate (GlcNAc-1-P), which is converted into UDP-GlcNAc by the transfer of uridine 5-monophosphate (from uridine 5-triphosphate), a reaction catalyzed by the N-terminal domain. This chain is Bifunctional protein GlmU, found in Francisella tularensis subsp. holarctica (strain OSU18).